A 92-amino-acid polypeptide reads, in one-letter code: uncharacterized protein (92 aa).

The 92-residue stretch at 1–92 (MNGNKDAIFK…LKNLLKGWIE (92 aa)) folds into the HTH arsR-type domain. The H-T-H motif DNA-binding region spans 37-61 (IRLITKYDLSITRQAIAKHLSVLED).

This is an uncharacterized protein from Bacillus subtilis (strain 168).